The primary structure comprises 143 residues: Putative transmembrane protein ORF32 (143 aa).

The next 2 helical transmembrane spans lie at G20–L42 and W52–V74.

It is found in the host membrane. The protein is Putative transmembrane protein ORF32 of Haloarcula hispanica (His1V).